Consider the following 336-residue polypeptide: UDP-N-acetylmuramoylpentapeptide-lysine N(6)-alanyltransferase (336 aa).

Substrate-binding positions include 37-40 (KNNW), Tyr-104, Arg-212, Tyr-216, and Tyr-257.

Belongs to the FemABX family.

The enzyme catalyses UDP-N-acetyl-alpha-D-muramoyl-L-alanyl-gamma-D-glutamyl-L-lysyl-D-alanyl-D-alanine + L-alanyl-tRNA(Ala) = UDP-N-acetyl-alpha-D-muramoyl-L-alanyl-gamma-D-glutamyl-N(6)-(L-alanyl)-L-lysyl-D-alanyl-D-alanine + tRNA(Ala) + H(+). In terms of biological role, involved in the synthesis of the bacterial cell wall. Catalyzes the addition of alanine into the interchain peptide bridge of peptidoglycan precursor using aminoacyl-tRNA(Ala) as amino acid donor. This alanine is added to the epsilon-amino group of the L-lysine of the peptidoglycan UDP-N-acetyl-alpha-D-muramoyl-L-alanyl-D-glutamyl-L-lysyl-D-alanyl-D-alanine, in a ribosome-independent mechanism. Specific for UDP-N-acetyl-muramoyl-pentapeptide. Has no activity toward UDP-N-acetyl-muramoyl-tetrapeptide or UDP-N-acetyl-muramoyl-tripeptide. Also acts on L-seryl-tRNA(Ser). The protein is UDP-N-acetylmuramoylpentapeptide-lysine N(6)-alanyltransferase of Weissella viridescens (Lactobacillus viridescens).